A 424-amino-acid chain; its full sequence is Enolase (424 aa).

Glutamine 162 is a binding site for (2R)-2-phosphoglycerate. Glutamate 204 (proton donor) is an active-site residue. Mg(2+)-binding residues include aspartate 241, glutamate 284, and aspartate 311. (2R)-2-phosphoglycerate-binding residues include lysine 336, arginine 365, serine 366, and lysine 387. The active-site Proton acceptor is lysine 336.

This sequence belongs to the enolase family. The cofactor is Mg(2+).

It localises to the cytoplasm. The protein resides in the secreted. It is found in the cell surface. The enzyme catalyses (2R)-2-phosphoglycerate = phosphoenolpyruvate + H2O. Its pathway is carbohydrate degradation; glycolysis; pyruvate from D-glyceraldehyde 3-phosphate: step 4/5. Functionally, catalyzes the reversible conversion of 2-phosphoglycerate (2-PG) into phosphoenolpyruvate (PEP). It is essential for the degradation of carbohydrates via glycolysis. The protein is Enolase of Sinorhizobium fredii (strain NBRC 101917 / NGR234).